A 262-amino-acid chain; its full sequence is 3-deoxy-manno-octulosonate cytidylyltransferase (262 aa).

The protein belongs to the KdsB family.

The protein localises to the cytoplasm. The catalysed reaction is 3-deoxy-alpha-D-manno-oct-2-ulosonate + CTP = CMP-3-deoxy-beta-D-manno-octulosonate + diphosphate. It participates in nucleotide-sugar biosynthesis; CMP-3-deoxy-D-manno-octulosonate biosynthesis; CMP-3-deoxy-D-manno-octulosonate from 3-deoxy-D-manno-octulosonate and CTP: step 1/1. It functions in the pathway bacterial outer membrane biogenesis; lipopolysaccharide biosynthesis. Its function is as follows. Activates KDO (a required 8-carbon sugar) for incorporation into bacterial lipopolysaccharide in Gram-negative bacteria. The protein is 3-deoxy-manno-octulosonate cytidylyltransferase of Acidovorax sp. (strain JS42).